The sequence spans 1724 residues: Sperm flagellar protein 2 (1724 aa).

The Calponin-homology (CH) domain occupies 1–105 (MSEILCQWLN…LLYQLYIALQ (105 aa)). Coiled coils occupy residues 170–203 (KAIE…KDLQ) and 255–351 (RRLL…REKE). The disordered stretch occupies residues 545 to 576 (HERQKSGKTPPTQEDDKRDPVVNQEKVSKTQD). Residues 558-576 (EDDKRDPVVNQEKVSKTQD) are compositionally biased toward basic and acidic residues. Residues 665-691 (NQAKLLEEALTGYKRKFLQLKKKKEQM) adopt a coiled-coil conformation. The interval 828–910 (EEKETEKKAG…PTAPPPPKAG (83 aa)) is disordered. The span at 853–862 (EAEKDKELHQ) shows a compositional bias: basic and acidic residues. Positions 995-1021 (EDLWEDEETKAELHQRVNDLRDRLWDI) form a coiled coil. The span at 1177 to 1194 (RLTEEEKEPPQLDSKEKS) shows a compositional bias: basic and acidic residues. 3 disordered regions span residues 1177 to 1241 (RLTE…EMAE), 1580 to 1618 (VSPI…NANT), and 1704 to 1724 (SEHA…DEKK). A compositionally biased stretch (basic residues) spans 1210 to 1221 (PKKKKTDKKGKG). Residues 1228–1580 (EVSPVTVTPE…MAEKTSISTV (353 aa)) are interaction with IFT20. Basic and acidic residues predominate over residues 1592–1607 (SSAKEDRELKEEKDDQ).

Interacts (via C-terminus) with IFT20. Interacts with DYNC1I2. Highly expressed in testis, where it primarily localizes to late spermatocytes, round spermatids and elongating spermatids (at protein level). Found in Sertoli cells of the testis (at protein level). Expressed at lower levels in epididymis (at protein level). Detected in lung, brain, liver and kidney. Also detected in bone, cartilage, trachea, pituitary gland and eye. Expressed in osteoblasts and chondrocytes.

The protein resides in the cell projection. Its subcellular location is the cilium. The protein localises to the flagellum. It is found in the cytoplasm. It localises to the cytoskeleton. The protein resides in the golgi apparatus. In terms of biological role, required for correct axoneme development in spermatozoa. Important for normal development of the manchette and sperm head morphology. Essential for male fertility. Plays a role in localization of the intraflagellar transport protein IFT20 to the manchette, suggesting function as an adapter for dynein-mediated protein transport during spermatogenesis. Also plays a role in bone growth where it seems to be required for normal osteoblast differentiation. In Mus musculus (Mouse), this protein is Sperm flagellar protein 2 (Spef2).